A 439-amino-acid chain; its full sequence is Methionine aminopeptidase 2-2 (439 aa).

The tract at residues 1–90 is disordered; the sequence is MAAQAPPTDE…SQLFPDKQYP (90 aa). The segment covering 10 to 23 has biased composition (basic and acidic residues); the sequence is ELSKLSVEDADNKP. The span at 35-45 shows a compositional bias: acidic residues; sequence DEDDSEDDAED. The segment covering 54–68 has biased composition (basic residues); the sequence is AKKKKKRKPRKKKKN. A substrate-binding site is contributed by histidine 192. Residues aspartate 212, aspartate 223, and histidine 292 each contribute to the a divalent metal cation site. A substrate-binding site is contributed by histidine 300. The a divalent metal cation site is built by glutamate 325 and glutamate 420.

It belongs to the peptidase M24A family. Methionine aminopeptidase eukaryotic type 2 subfamily. Co(2+) serves as cofactor. It depends on Zn(2+) as a cofactor. Requires Mn(2+) as cofactor. The cofactor is Fe(2+).

It localises to the cytoplasm. It carries out the reaction Release of N-terminal amino acids, preferentially methionine, from peptides and arylamides.. In terms of biological role, cotranslationally removes the N-terminal methionine from nascent proteins. The N-terminal methionine is often cleaved when the second residue in the primary sequence is small and uncharged (Met-Ala-, Cys, Gly, Pro, Ser, Thr, or Val). This Chaetomium globosum (strain ATCC 6205 / CBS 148.51 / DSM 1962 / NBRC 6347 / NRRL 1970) (Soil fungus) protein is Methionine aminopeptidase 2-2.